Consider the following 150-residue polypeptide: Deoxyuridine 5'-triphosphate nucleotidohydrolase (150 aa).

Substrate contacts are provided by residues 65 to 67, Asn78, and 82 to 84; these read RSG and TID. A disordered region spans residues 130–150; sequence LSDTERGEGGFGHTGVASKAE.

This sequence belongs to the dUTPase family. Mg(2+) is required as a cofactor.

The enzyme catalyses dUTP + H2O = dUMP + diphosphate + H(+). Its pathway is pyrimidine metabolism; dUMP biosynthesis; dUMP from dCTP (dUTP route): step 2/2. Its function is as follows. This enzyme is involved in nucleotide metabolism: it produces dUMP, the immediate precursor of thymidine nucleotides and it decreases the intracellular concentration of dUTP so that uracil cannot be incorporated into DNA. The chain is Deoxyuridine 5'-triphosphate nucleotidohydrolase from Chlorobaculum parvum (strain DSM 263 / NCIMB 8327) (Chlorobium vibrioforme subsp. thiosulfatophilum).